The primary structure comprises 377 residues: Tubulin--tyrosine ligase (377 aa).

In terms of domain architecture, TTL spans 3 to 370 (TFVVRDENSS…PPDVEQPQTQ (368 aa)).

It belongs to the tubulin--tyrosine ligase family. Monomer. Mg(2+) is required as a cofactor. Requires K(+) as cofactor.

It carries out the reaction C-terminal L-alpha-aminoacyl-L-glutamyl-L-glutamyl-[tubulin] + L-tyrosine + ATP = C-terminal L-alpha-aminoacyl-L-glutamyl-L-glutamyl-L-tyrosyl-[tubulin] + ADP + phosphate + H(+). In terms of biological role, catalyzes the post-translational addition of a tyrosine to the C-terminal end of detyrosinated alpha-tubulin. This chain is Tubulin--tyrosine ligase (TTL), found in Homo sapiens (Human).